A 745-amino-acid polypeptide reads, in one-letter code: Aminopeptidase NAALADL1 (745 aa).

Residues 1–6 are Cytoplasmic-facing; it reads MHWAKI. The helical; Signal-anchor for type II membrane protein transmembrane segment at 7–28 threads the bilayer; the sequence is LGVGIGAAALLGLGIILGHFAI. The Extracellular segment spans residues 29–745; sequence PKATEPLASS…AATLQPVTDL (717 aa). N-linked (GlcNAc...) asparagine glycans are attached at residues N128, N141, and N235. Residues T263 and L266 each contribute to the Ca(2+) site. 3 N-linked (GlcNAc...) asparagine glycosylation sites follow: N279, N304, and N350. C301 and C318 are oxidised to a cystine. Residues H373 and D383 each coordinate Zn(2+). E421 (proton donor/acceptor) is an active-site residue. Residue E422 participates in Zn(2+) binding. The Ca(2+) site is built by E430 and E433. A Zn(2+)-binding site is contributed by D450. N-linked (GlcNAc...) asparagine glycosylation is found at N456 and N497. Residue H550 participates in Zn(2+) binding. N-linked (GlcNAc...) asparagine glycosylation is found at N593 and N620.

It belongs to the peptidase M28 family. M28B subfamily. In terms of assembly, homodimer. It depends on Zn(2+) as a cofactor. In terms of processing, N-glycosylated. As to expression, detected on apical villi on the brush border membrane of ileum enterocytes (at protein level). Mainly expressed in the distal small intestine.

Its subcellular location is the apical cell membrane. Its function is as follows. Aminopeptidase with broad substrate specificity. Has lower activity with substrates that have Asp or Glu in the P2' position, or Pro in the P3' position. Lacks activity with substrates that have both Pro in the P3' position and Asp or Glu in the P2' position. Lacks carboxypeptidase activity. Lacks dipeptidyl-peptidase IV type activity. The polypeptide is Aminopeptidase NAALADL1 (Naaladl1) (Rattus norvegicus (Rat)).